We begin with the raw amino-acid sequence, 203 residues long: Outer-membrane lipoprotein carrier protein (203 aa).

A signal peptide spans 1-21 (MKKMAIACALLSSVVASSVWA). A disordered region spans residues 178–203 (QQNGAVDPSKFTFTPPQGVTIDDQRK).

Belongs to the LolA family. In terms of assembly, monomer.

The protein localises to the periplasm. Its function is as follows. Participates in the translocation of lipoproteins from the inner membrane to the outer membrane. Only forms a complex with a lipoprotein if the residue after the N-terminal Cys is not an aspartate (The Asp acts as a targeting signal to indicate that the lipoprotein should stay in the inner membrane). This is Outer-membrane lipoprotein carrier protein from Salmonella paratyphi A (strain ATCC 9150 / SARB42).